Reading from the N-terminus, the 428-residue chain is 3-phosphoshikimate 1-carboxyvinyltransferase (428 aa).

The 3-phosphoshikimate site is built by lysine 20, serine 21, and arginine 25. Lysine 20 lines the phosphoenolpyruvate pocket. Phosphoenolpyruvate is bound by residues glycine 92 and arginine 120. Positions 166, 168, 314, and 341 each coordinate 3-phosphoshikimate. Glutamine 168 is a binding site for phosphoenolpyruvate. Aspartate 314 serves as the catalytic Proton acceptor. Phosphoenolpyruvate-binding residues include arginine 345 and arginine 387.

The protein belongs to the EPSP synthase family. As to quaternary structure, monomer.

The protein localises to the cytoplasm. It carries out the reaction 3-phosphoshikimate + phosphoenolpyruvate = 5-O-(1-carboxyvinyl)-3-phosphoshikimate + phosphate. Its pathway is metabolic intermediate biosynthesis; chorismate biosynthesis; chorismate from D-erythrose 4-phosphate and phosphoenolpyruvate: step 6/7. Functionally, catalyzes the transfer of the enolpyruvyl moiety of phosphoenolpyruvate (PEP) to the 5-hydroxyl of shikimate-3-phosphate (S3P) to produce enolpyruvyl shikimate-3-phosphate and inorganic phosphate. In Listeria monocytogenes serotype 4a (strain HCC23), this protein is 3-phosphoshikimate 1-carboxyvinyltransferase.